A 179-amino-acid chain; its full sequence is Interferon lambda-4 (179 aa).

A signal peptide spans 1 to 21 (MRPSVWAAVAAGLWVLCTVIA). Positions 130 to 149 (SSRKVPGAQKRRHKPRRADS) are disordered.

The protein belongs to the lambda interferon family.

The protein resides in the cytoplasm. It is found in the secreted. Its function is as follows. Cytokine that may trigger an antiviral response activating the JAK-STAT pathway and up-regulating specifically some interferon-stimulated genes. This chain is Interferon lambda-4 (IFNL4), found in Homo sapiens (Human).